The sequence spans 486 residues: Cytochrome P450 monooxygenase 1 (486 aa).

The first 21 residues, 1–21 (MSHFLPTLILTSLTLVAYVLA), serve as a signal peptide directing secretion. Asn-346 carries N-linked (GlcNAc...) asparagine glycosylation. A heme-binding site is contributed by Cys-430. Residue Asn-434 is glycosylated (N-linked (GlcNAc...) asparagine).

Belongs to the cytochrome P450 family. Heme is required as a cofactor.

It participates in mycotoxin biosynthesis. Its function is as follows. Cytochrome P450 monooxygenase; part of the gene cluster that mediates the biosynthesis of aphidicolin, a specific inhibitor of eukaryotic DNA synthesis and DNA polymerase alpha. The geranylgeranyl pyrophosphate synthase GGS is required for supplying a sufficient amount of geranylgeranyl diphosphate (GGDP), the general precursor of diterpenes. The diterpene synthase ACS then catalyzes the conversion of geranylgeranyl diphosphate to aphidicolan-16-beta-ol via the intermediate syn-copalyldiphosphate (syn-CDP). In addition to aphidicolan-16-beta-ol, the enzyme also produces low levels of amphidicol-15-ene and amphidicol-16-ene. The cytochrome P450 monooxygenase P450-2 then catalyzes the two-step hydroxylation from aphidicolan-16-beta-ol to 3-deoxyaphidicolin via a 17,3-deoxyaphidicolin intermediate. Finally, the cytochrome P450 monooxygenase P450-1 converts 3-deoxyaphidicolin to aphidicolin. This is Cytochrome P450 monooxygenase 1 (PbP450-1) from Neocamarosporium betae (Beet black rot fungus).